Consider the following 407-residue polypeptide: uncharacterized protein (407 aa).

The next 12 helical transmembrane spans lie at 22–42 (IVSV…PLAV), 51–71 (LGFS…ATLA), 101–121 (ALLL…GLLV), 126–146 (VLGI…IGRV), 154–174 (VISW…PVGV), 179–199 (ALIP…GYYL), 227–247 (GLGL…ITLY), 258–278 (LSLT…ANTI), 286–306 (VAIV…LAPV), 309–329 (VALV…PALG), 347–367 (AYSV…GYVA), and 369–389 (AFGY…GVAL).

The protein belongs to the major facilitator superfamily. YhhS family.

Its subcellular location is the cell inner membrane. This is an uncharacterized protein from Burkholderia mallei (strain NCTC 10229).